An 87-amino-acid polypeptide reads, in one-letter code: Large ribosomal subunit protein bL27 (87 aa).

Belongs to the bacterial ribosomal protein bL27 family.

This Dechloromonas aromatica (strain RCB) protein is Large ribosomal subunit protein bL27.